The following is a 648-amino-acid chain: MVSLLPPQSDVTLPGSTRLEGEPQGDLMQAPGLPDSPAPQNKHANFSCSSFVPDGPPERTPSLPPHSPSIASPDPEQIQGHCTAGPGPGSFRLSPSEKYPGFGFEEGPAGSPGRFLKGNHMPFHPYKRHFHEDIFSEAQTAMALDGHSFKTQGALEAFEEIPVDMGDAEAFLPSFPAEAWCNKLPYPSQEHNQILQGSEVKVKPQALDSGPGMYCYQPPLQHMYCSSQPAFHQYSPGGGSYPVPYLGSPHYPYQRIAPQANAEGHQPLFPKPIYSYSILIFMALKNSKTGSLPVSEIYNFMTEHFPYFKTAPDGWKNSVRHNLSLNKCFEKVENKSGSSSRKGCLWALNPSKIDKMQEELQKWKRKDPIAVRKSMAKPEELDSLIGDKREKLGSPLLGCPPPGLAGPGPIRPMAPSAGLSQPLHPMHPAPGPMPGKNPLQDLLGGHAPSCYGQTYPHLSPSLAPSGHQQPLFPQPDGHLELQAQPGTPQDSPLPAHTPPSHGAKLMAEPSSARTMHDTLLPDGDLGTDLDAINPSLTDFDFQGNLWEQLKDDSLALDPLVLVTSSPTSSSMLPPPPAAHCFPPGPCLAETGNEAGELAPPGSGGSGALGDMHLSTLYSAFVELESTPSSAAAGPAVYLSPGSKPLALA.

The interval 1–95 (MVSLLPPQSD…PGPGSFRLSP (95 aa)) is disordered. Residues 38–50 (APQNKHANFSCSS) show a composition bias toward polar residues. The span at 54–67 (DGPPERTPSLPPHS) shows a compositional bias: pro residues. The segment at residues 271-367 (KPIYSYSILI…EELQKWKRKD (97 aa)) is a DNA-binding region (fork-head). 3 disordered regions span residues 392-432 (LGSP…APGP), 457-521 (HLSP…TLLP), and 629-648 (SAAA…LALA). The span at 398–412 (GCPPPGLAGPGPIRP) shows a compositional bias: pro residues.

As to expression, bone marrow (at protein level). Expressed in thymus and skin.

The protein localises to the nucleus. Its function is as follows. Transcriptional regulator which regulates the development, differentiation, and function of thymic epithelial cells (TECs) both in the prenatal and postnatal thymus. Acts as a master regulator of the TECs lineage development and is required from the onset of differentiation in progenitor TECs in the developing fetus to the final differentiation steps through which TECs mature to acquire their full functionality. Regulates, either directly or indirectly the expression of a variety of genes that mediate diverse aspects of thymus development and function, including MHC Class II, DLL4, CCL25, CTSL, CD40 and PAX1. Regulates the differentiation of the immature TECs into functional cortical TECs (cTECs) and medullary TECs (mTECs). Essential for maintenance of mTECs population in the postnatal thymus. Involved in the morphogenesis and maintenance of the three-dimensional thymic microstructure which is necessary for a fully functional thymus. Plays an important role in the maintenance of hematopoiesis and particularly T lineage progenitors within the bone marrow niche with age. Essential for the vascularization of the thymus anlage. Promotes the terminal differentiation of epithelial cells in the epidermis and hair follicles, partly by negatively regulating the activity of protein kinase C. The sequence is that of Forkhead box protein N1 (Foxn1) from Mus musculus (Mouse).